Here is a 372-residue protein sequence, read N- to C-terminus: Ligninase H2 (372 aa).

The first 21 residues, 1–21 (MAFKQLLAALSVALTLQVTQA), serve as a signal peptide directing secretion. Positions 22-28 (APNLDKR) are excised as a propeptide. Disulfide bonds link Cys-31-Cys-44, Cys-43-Cys-314, Cys-63-Cys-149, and Cys-278-Cys-344. His-76 functions as the Proton acceptor in the catalytic mechanism. Ca(2+) is bound by residues Asp-77, Gly-95, Asp-97, and Ser-99. His-205 is a binding site for heme b. Ser-206, Asp-223, Thr-225, Gln-228, and Asp-230 together coordinate Ca(2+). A glycan (N-linked (GlcNAc...) asparagine) is linked at Asn-286.

This sequence belongs to the peroxidase family. Ligninase subfamily. Requires heme b as cofactor. Ca(2+) serves as cofactor.

It carries out the reaction 1-(3,4-dimethoxyphenyl)-2-(2-methoxyphenoxy)propane-1,3-diol + H2O2 = 3,4-dimethoxybenzaldehyde + guaiacol + glycolaldehyde + H2O. It catalyses the reaction 2 (3,4-dimethoxyphenyl)methanol + H2O2 = 2 (3,4-dimethoxyphenyl)methanol radical + 2 H2O. The protein operates within secondary metabolite metabolism; lignin degradation. Its function is as follows. Depolymerization of lignin. Catalyzes the C(alpha)-C(beta) cleavage of the propyl side chains of lignin. The polypeptide is Ligninase H2 (GLG4) (Phanerodontia chrysosporium (White-rot fungus)).